The sequence spans 557 residues: Urocanate hydratase (557 aa).

Residues 1 to 20 form a disordered region; sequence MSNPRHNEREVRSPRGDELN. Residues 52–53, Gln130, 176–178, Glu196, Arg201, 242–243, 263–267, 273–274, and Tyr322 each bind NAD(+); these read GG, GMG, NA, QTSAH, and YL. Cys410 is a catalytic residue. NAD(+) is bound at residue Gly492.

Belongs to the urocanase family. It depends on NAD(+) as a cofactor.

It is found in the cytoplasm. It catalyses the reaction 4-imidazolone-5-propanoate = trans-urocanate + H2O. The protein operates within amino-acid degradation; L-histidine degradation into L-glutamate; N-formimidoyl-L-glutamate from L-histidine: step 2/3. Catalyzes the conversion of urocanate to 4-imidazolone-5-propionate. The chain is Urocanate hydratase from Brucella anthropi (strain ATCC 49188 / DSM 6882 / CCUG 24695 / JCM 21032 / LMG 3331 / NBRC 15819 / NCTC 12168 / Alc 37) (Ochrobactrum anthropi).